The chain runs to 535 residues: Protein translocase subunit SecD (535 aa).

The next 6 membrane-spanning stretches (helical) occupy residues 5 to 25, 377 to 397, 402 to 421, 425 to 444, 469 to 489, and 496 to 516; these read LTWK…GIIG, AIIG…GAGI, SLLL…GAVL, GIAG…VLIF, WLTI…LFLF, and GFAV…VFVS.

This sequence belongs to the SecD/SecF family. SecD subfamily. Forms a complex with SecF. Part of the essential Sec protein translocation apparatus which comprises SecA, SecYEG and auxiliary proteins SecDF. Other proteins may also be involved.

It localises to the cell inner membrane. In terms of biological role, part of the Sec protein translocase complex. Interacts with the SecYEG preprotein conducting channel. SecDF uses the proton motive force (PMF) to complete protein translocation after the ATP-dependent function of SecA. This is Protein translocase subunit SecD from Koribacter versatilis (strain Ellin345).